The sequence spans 1362 residues: DNA-directed RNA polymerase subunit beta' (1362 aa).

Residues 1-14 are compositionally biased toward basic residues; the sequence is MTSSSKSRKSKSSK. Positions 1-39 are disordered; sequence MTSSSKSRKSKSSKASKAAKEAPVSASRPLSKTPPPFRN. Positions 15-27 are enriched in low complexity; sequence ASKAAKEAPVSAS. Zn(2+) contacts are provided by Cys-248, Cys-315, Cys-322, and Cys-325. The segment at 1316 to 1336 is disordered; it reads TRHNIDPSASNFAAFTRPDAD.

Belongs to the RNA polymerase beta' chain family. RpoC2 subfamily. In cyanobacteria the RNAP catalytic core is composed of 2 alpha, 1 beta, 1 beta', 1 gamma and 1 omega subunit. When a sigma factor is associated with the core the holoenzyme is formed, which can initiate transcription. It depends on Zn(2+) as a cofactor.

It carries out the reaction RNA(n) + a ribonucleoside 5'-triphosphate = RNA(n+1) + diphosphate. In terms of biological role, DNA-dependent RNA polymerase catalyzes the transcription of DNA into RNA using the four ribonucleoside triphosphates as substrates. The sequence is that of DNA-directed RNA polymerase subunit beta' from Synechococcus sp. (strain CC9605).